A 481-amino-acid polypeptide reads, in one-letter code: uncharacterized protein (481 aa).

To M.tuberculosis RV2411c.

This is an uncharacterized protein from Synechocystis sp. (strain ATCC 27184 / PCC 6803 / Kazusa).